A 285-amino-acid chain; its full sequence is MSRNLSIRAKVFLKPLVLFQIIDAYDRRPKGDNQVMGTLLGRTKEDHIEITNCFTVPHKEHSENKRIDLDMAYASEVLELNMFAYPNERVLGWFCTGKSVSRSASLIHDYYVRECGERQPLHLLVDASLKNQRLSTRLYCAVEMGVPGGTKGLMFSLVPLEISSENSDLVAVRCIEKQSQQQASKQMERFVPELVQVVDATRNIQQRLDLLLRYINDVLARKKKPDNLVGRSLQAALTAVPLFDSEKFRLMFNTNVRDMLMAITLSTMIKTQLEISEKLSCMQDQ.

The region spanning 11–145 (VFLKPLVLFQ…TRLYCAVEMG (135 aa)) is the MPN domain.

It belongs to the eIF-3 subunit F family. In terms of assembly, component of the eukaryotic translation initiation factor 3 (eIF-3) complex. The eIF-3 complex interacts with pix.

The protein localises to the cytoplasm. In terms of biological role, component of the eukaryotic translation initiation factor 3 (eIF-3) complex, which is involved in protein synthesis of a specialized repertoire of mRNAs and, together with other initiation factors, stimulates binding of mRNA and methionyl-tRNAi to the 40S ribosome. The eIF-3 complex specifically targets and initiates translation of a subset of mRNAs involved in cell proliferation. The sequence is that of Eukaryotic translation initiation factor 3 subunit F-2 from Drosophila sechellia (Fruit fly).